The primary structure comprises 633 residues: Extracellular metalloproteinase 3 (633 aa).

A signal peptide spans 1-18 (MHGLLLAGLLALPMNVLA). Positions 19–246 (HPAEHHASNV…VHNVVDYVAS (228 aa)) are excised as a propeptide. 2 N-linked (GlcNAc...) asparagine glycosylation sites follow: Asn232 and Asn410. His429 is a Zn(2+) binding site. The active site involves Glu430. Position 433 (His433) interacts with Zn(2+). N-linked (GlcNAc...) asparagine glycans are attached at residues Asn480 and Asn622.

It belongs to the peptidase M36 family. It depends on Zn(2+) as a cofactor.

The protein localises to the secreted. Functionally, secreted metalloproteinase that allows assimilation of proteinaceous substrates and probably acts as a virulence factor. This Arthroderma gypseum (strain ATCC MYA-4604 / CBS 118893) (Microsporum gypseum) protein is Extracellular metalloproteinase 3 (MEP3).